The chain runs to 369 residues: 3 beta-hydroxysteroid dehydrogenase type 7 (369 aa).

Tyr159 functions as the Proton acceptor in the catalytic mechanism. Lys163 serves as a coordination point for NAD(+). The next 2 helical transmembrane spans lie at 289–309 (LLPY…QWLL) and 311–331 (PLVL…NTTF).

The protein belongs to the 3-beta-HSD family.

It localises to the endoplasmic reticulum membrane. It catalyses the reaction 7alpha-hydroxycholesterol + NAD(+) = 7alpha-hydroxycholest-4-en-3-one + NADH + H(+). The enzyme catalyses 7alpha,25-dihydroxycholesterol + NAD(+) = 7alpha,25-dihydroxy-4-cholesten-3-one + NADH + H(+). The catalysed reaction is (25R)-cholest-5-en-3beta,7alpha,26-triol + NAD(+) = (25R)-7alpha,26-dihydroxycholest-4-en-3-one + NADH + H(+). It carries out the reaction (24S)-7alpha-dihydroxycholesterol + NAD(+) = (24S)-7alpha,24-dihydroxycholest-4-en-3-one + NADH + H(+). Its pathway is lipid metabolism; steroid biosynthesis. Functionally, the 3-beta-HSD enzymatic system plays a crucial role in the biosynthesis of all classes of hormonal steroids. HSD VII is active against four 7-alpha-hydroxylated sterols. Does not metabolize several different C(19/21) steroids as substrates. Involved in bile acid synthesis. Plays a key role in cell positioning and movement in lymphoid tissues by mediating degradation of 7-alpha,25-dihydroxycholesterol (7-alpha,25-OHC): 7-alpha,25-OHC acts as a ligand for the G protein-coupled receptor GPR183/EBI2, a chemotactic receptor for a number of lymphoid cells. This chain is 3 beta-hydroxysteroid dehydrogenase type 7, found in Homo sapiens (Human).